The primary structure comprises 326 residues: D-threonate 4-phosphate dehydrogenase (326 aa).

Substrate is bound by residues His138 and Thr139. A divalent metal cation contacts are provided by His168, His212, and His267. Residues Lys275, Asn284, and Arg293 each coordinate substrate.

Belongs to the PdxA family. PdxA2 subfamily. Homodimer. A divalent metal cation serves as cofactor.

The enzyme catalyses 4-O-phospho-D-threonate + NAD(+) = dihydroxyacetone phosphate + CO2 + NADH. Its function is as follows. Catalyzes the NAD-dependent oxidation and subsequent decarboxylation of D-threonate 4-phosphate to produce dihydroxyacetone phosphate (DHAP). Can also use 4-hydroxy-L-threonine 4-phosphate as substrate. This is D-threonate 4-phosphate dehydrogenase from Pectobacterium atrosepticum (strain SCRI 1043 / ATCC BAA-672) (Erwinia carotovora subsp. atroseptica).